The primary structure comprises 670 residues: MSESVHQRLEELKESLHYHAVRYYVEDNPEIPDAEYDRLMRELLEIEAQHPDLVTVDSPSQRVGGKPLSEFSQVTHEVPMLSLDNAFDDSELDSFHKRAQDRIGGESIKQYCCEPKLDGLAVSLLYENGILVQAATRGDGTTGENITENVRTINAIPLKLRGDDWPARLEVRGEVFMPKAGFEKLNELARQKGEKVFVNPRNAAAGSLRQLDSRITASRPLSFYAYSVGVVQGADLAASHYERFLQIKSWGLPMCPETKRVDSLADVKTYYQHILQRRDALPYEIDGVVIKIDDIAVQERLGFVARAPRWAIAYKFPAQEEITTLNEVEFQVGRTGAITPVAKLEPVFVGGVTVSNATLHNADEIERLQVKIGDQVVIRRAGDVIPQVVSVIKERRPETARDIIFPTQCPVCGSHVERIEGEAVTRCTGGLVCQAQRKQALKHFVSRKALDVDGLGDKVIEQLVDREMVETPADLFKLSAGVLTVLERMGPKSAQNIVNALEKSKLTTLPRFLYSLGIREVGEATAANLAQHFKSLEAIQAATEEQLIAVQDIGVVVAKHITTFFEEEQNQAVVQDLLVQGIHWPEVSAPEQGAELPLEGKTVVLTGTLSQLGRTEAKEALQSLGAKVTGSVSKKTDILFAGENAGSKLAKAQELGIEIKTEQDLLELIN.

NAD(+) contacts are provided by residues 33–37, 82–83, and E114; these read DAEYD and SL. Catalysis depends on K116, which acts as the N6-AMP-lysine intermediate. 4 residues coordinate NAD(+): R137, E174, K291, and K315. Positions 409, 412, 427, and 433 each coordinate Zn(2+). Positions 593–670 constitute a BRCT domain; sequence GAELPLEGKT…TEQDLLELIN (78 aa).

This sequence belongs to the NAD-dependent DNA ligase family. LigA subfamily. Mg(2+) is required as a cofactor. Requires Mn(2+) as cofactor.

The catalysed reaction is NAD(+) + (deoxyribonucleotide)n-3'-hydroxyl + 5'-phospho-(deoxyribonucleotide)m = (deoxyribonucleotide)n+m + AMP + beta-nicotinamide D-nucleotide.. In terms of biological role, DNA ligase that catalyzes the formation of phosphodiester linkages between 5'-phosphoryl and 3'-hydroxyl groups in double-stranded DNA using NAD as a coenzyme and as the energy source for the reaction. It is essential for DNA replication and repair of damaged DNA. The sequence is that of DNA ligase from Vibrio parahaemolyticus serotype O3:K6 (strain RIMD 2210633).